The following is a 112-amino-acid chain: Integration host factor subunit alpha (112 aa).

It belongs to the bacterial histone-like protein family. In terms of assembly, heterodimer of an alpha and a beta chain.

This protein is one of the two subunits of integration host factor, a specific DNA-binding protein that functions in genetic recombination as well as in transcriptional and translational control. In Rhizobium leguminosarum bv. trifolii (strain WSM2304), this protein is Integration host factor subunit alpha.